Consider the following 107-residue polypeptide: UPF0213 protein SG0387 (107 aa).

The GIY-YIG domain occupies 4 to 79; that stretch reads SLWHLYLIRT…KQLSRAQKEH (76 aa).

Belongs to the UPF0213 family.

The chain is UPF0213 protein SG0387 from Sodalis glossinidius (strain morsitans).